The chain runs to 239 residues: UPF0502 protein Bcen_5249 (239 aa).

The interval 196 to 239 (IRGAKGRTEAPRGRSGATQCAGSTDGERTRHRRRRTGRRVLIAS) is disordered. The segment covering 224–233 (TRHRRRRTGR) has biased composition (basic residues).

Belongs to the UPF0502 family.

This Burkholderia orbicola (strain AU 1054) protein is UPF0502 protein Bcen_5249.